The sequence spans 319 residues: 1-aminocyclopropane-1-carboxylate oxidase 1 (319 aa).

The 101-residue stretch at 153-253 folds into the Fe2OG dioxygenase domain; the sequence is PNFGTKVSNY…RMSLASFYNP (101 aa). Residues H177, D179, and H234 each contribute to the Fe cation site.

Belongs to the iron/ascorbate-dependent oxidoreductase family. Fe cation serves as cofactor.

It catalyses the reaction 1-aminocyclopropane-1-carboxylate + L-ascorbate + O2 = ethene + L-dehydroascorbate + hydrogen cyanide + CO2 + 2 H2O. Its pathway is alkene biosynthesis; ethylene biosynthesis via S-adenosyl-L-methionine; ethylene from S-adenosyl-L-methionine: step 2/2. The chain is 1-aminocyclopropane-1-carboxylate oxidase 1 (ACO1) from Petunia hybrida (Petunia).